The sequence spans 416 residues: MKKYESRRSKIADGVYWVGVLDWDIRMYHGYTLKGTTYNAYLVFGDEKVALIDNTYPGTSAQMWGRIKDAFEKEGREFKIDVIVQNHVEKDHSGALPEIHKKFPDAPIYCTEVAVEGLKKHYPSLKDAQFKVVHTGDTVDLGGKTLTFLEAPLLHWPDSMFTFYNEGGILFSNDAFGQHLCFPAHKRFDKDIPEYVLMDANQKFYANLITPLSKLVLKKFEEVIQLGLLEKIKMIAPSHGQIWTDPMKVIKAYQDFATGKAAKDKAVIVYDTMHYSTQKMAHAFAEGLMSEGIDVVMYFLHYDERSEIVKDILDAKAVLFGIPTIYDEPYPSIGDIIYYLRGLKFNRTGFKRLAVTFGSMGGEGGAVAKIAEDLAKCGFEVINQYELYYVPTEDELTNCYNMGKELAKRIKEMKIE.

Residues H87, E89, D91, H92, H155, D174, and H239 each contribute to the Fe cation site. One can recognise a Flavodoxin-like domain in the interval 266 to 407 (AVIVYDTMHY…NCYNMGKELA (142 aa)). Residues 272–277 (TMHYST), 324–327 (TIYD), and 359–364 (SMGGEG) each bind FMN.

In the N-terminal section; belongs to the zinc metallo-hydrolase group 3 family. FMN is required as a cofactor. Requires Fe cation as cofactor.

The catalysed reaction is 2 reduced coenzyme F420-(gamma-L-Glu)(n) + O2 = 2 oxidized coenzyme F420-(gamma-L-Glu)(n) + 2 H2O + 2 H(+). Catalyzes the oxidation of F420H(2) with O(2). May be involved in O(2) detoxification, reducing the intracellular O(2) concentration to a level allowing growth at the expense of methane formation. The sequence is that of Coenzyme F420H(2) oxidase (fprA) from Methanocaldococcus jannaschii (strain ATCC 43067 / DSM 2661 / JAL-1 / JCM 10045 / NBRC 100440) (Methanococcus jannaschii).